A 128-amino-acid chain; its full sequence is Sulfurtransferase TusD (128 aa).

The active-site Cysteine persulfide intermediate is the cysteine 78.

This sequence belongs to the DsrE/TusD family. Heterohexamer, formed by a dimer of trimers. The hexameric TusBCD complex contains 2 copies each of TusB, TusC and TusD. The TusBCD complex interacts with TusE.

The protein localises to the cytoplasm. Its function is as follows. Part of a sulfur-relay system required for 2-thiolation of 5-methylaminomethyl-2-thiouridine (mnm(5)s(2)U) at tRNA wobble positions. Accepts sulfur from TusA and transfers it in turn to TusE. In Salmonella dublin (strain CT_02021853), this protein is Sulfurtransferase TusD.